Here is a 360-residue protein sequence, read N- to C-terminus: Alanine racemase (360 aa).

The active-site Proton acceptor; specific for D-alanine is Lys-34. Lys-34 is modified (N6-(pyridoxal phosphate)lysine). Residue Arg-129 participates in substrate binding. The Proton acceptor; specific for L-alanine role is filled by Tyr-254. Met-302 contacts substrate.

It belongs to the alanine racemase family. Requires pyridoxal 5'-phosphate as cofactor.

The enzyme catalyses L-alanine = D-alanine. The protein operates within amino-acid biosynthesis; D-alanine biosynthesis; D-alanine from L-alanine: step 1/1. In terms of biological role, catalyzes the interconversion of L-alanine and D-alanine. May also act on other amino acids. The polypeptide is Alanine racemase (alr) (Pectobacterium carotovorum subsp. carotovorum (strain PC1)).